The following is a 200-amino-acid chain: MDVGFLSSDLFTFGLIPVLIFLARICDVSIGTIRYIMISRGFKFIAPVFGFFEVTIWLLAIGQVMANITNPICYIAYGAGFAAGTYIGMELEERMKLGMAIIRLITPLPTEDFIARLRQYGYGVTNITAQGANGEVTIIFMVVKRAKIPHLAILIRDFNPHAFYTIEDVRSASEGIYPIEDKNNPFSIFKRPFLFIGKRK.

The next 3 membrane-spanning stretches (helical) occupy residues 3–23 (VGFL…IFLA), 44–64 (FIAP…IGQV), and 71–91 (PICY…GMEL).

It belongs to the UPF0316 family.

It is found in the cell membrane. In Methanospirillum hungatei JF-1 (strain ATCC 27890 / DSM 864 / NBRC 100397 / JF-1), this protein is UPF0316 protein Mhun_0543.